Consider the following 549-residue polypeptide: Glucose-6-phosphate isomerase (549 aa).

The active-site Proton donor is glutamate 355. Active-site residues include histidine 387 and lysine 515.

Belongs to the GPI family.

It is found in the cytoplasm. It catalyses the reaction alpha-D-glucose 6-phosphate = beta-D-fructose 6-phosphate. It participates in carbohydrate biosynthesis; gluconeogenesis. It functions in the pathway carbohydrate degradation; glycolysis; D-glyceraldehyde 3-phosphate and glycerone phosphate from D-glucose: step 2/4. Functionally, catalyzes the reversible isomerization of glucose-6-phosphate to fructose-6-phosphate. The sequence is that of Glucose-6-phosphate isomerase from Haemophilus influenzae (strain PittGG).